We begin with the raw amino-acid sequence, 239 residues long: ATP synthase subunit b (239 aa).

Low complexity predominate over residues 1–22 (MYAQEAQQKPEAQQSAPAAEQP). Residues 1–64 (MYAQEAQQKP…GEEEAGEHME (64 aa)) form a disordered region. Basic and acidic residues-rich tracts occupy residues 23–33 (KPAEEQAKPEQ) and 45–64 (ELSE…EHME). A helical transmembrane segment spans residues 85 to 105 (SYWIAMAFNFAIVFALLGWAM).

It belongs to the ATPase B chain family. As to quaternary structure, F-type ATPases have 2 components, F(1) - the catalytic core - and F(0) - the membrane proton channel. F(1) has five subunits: alpha(3), beta(3), gamma(1), delta(1), epsilon(1). F(0) has three main subunits: a(1), b(2) and c(10-14). The alpha and beta chains form an alternating ring which encloses part of the gamma chain. F(1) is attached to F(0) by a central stalk formed by the gamma and epsilon chains, while a peripheral stalk is formed by the delta and b chains.

The protein localises to the cell inner membrane. Its function is as follows. F(1)F(0) ATP synthase produces ATP from ADP in the presence of a proton or sodium gradient. F-type ATPases consist of two structural domains, F(1) containing the extramembraneous catalytic core and F(0) containing the membrane proton channel, linked together by a central stalk and a peripheral stalk. During catalysis, ATP synthesis in the catalytic domain of F(1) is coupled via a rotary mechanism of the central stalk subunits to proton translocation. Component of the F(0) channel, it forms part of the peripheral stalk, linking F(1) to F(0). This is ATP synthase subunit b from Koribacter versatilis (strain Ellin345).